We begin with the raw amino-acid sequence, 133 residues long: Exosome complex protein C1739.07 (133 aa).

Residues 96–133 form a disordered region; it reads VNPKTEAVNTSNAAISSSSSNRPKVAKDAATRIIKHHT. Positions 102-116 are enriched in low complexity; the sequence is AVNTSNAAISSSSSN.

It belongs to the C1D family. In terms of assembly, component of the exosome multienzyme ribonuclease complex. Interacts with cut3.

The protein resides in the cytoplasm. The protein localises to the nucleus. In terms of biological role, required for exosome-dependent processing of pre-rRNA and small nucleolar RNA (snRNA) precursors. Involved in processing of 35S pre-rRNA at the A0, A1 and A2 sites. This chain is Exosome complex protein C1739.07, found in Schizosaccharomyces pombe (strain 972 / ATCC 24843) (Fission yeast).